A 375-amino-acid chain; its full sequence is Tyrosine--tRNA ligase (375 aa).

5 residues coordinate L-tyrosine: Tyr37, Tyr168, Gln172, Asp175, and Gln190. Positions 251–255 match the 'KMSKS' region motif; it reads KMSKS. Residue Lys254 coordinates ATP.

This sequence belongs to the class-I aminoacyl-tRNA synthetase family. TyrS type 4 subfamily. As to quaternary structure, homodimer.

Its subcellular location is the cytoplasm. It catalyses the reaction tRNA(Tyr) + L-tyrosine + ATP = L-tyrosyl-tRNA(Tyr) + AMP + diphosphate + H(+). Catalyzes the attachment of tyrosine to tRNA(Tyr) in a two-step reaction: tyrosine is first activated by ATP to form Tyr-AMP and then transferred to the acceptor end of tRNA(Tyr). This chain is Tyrosine--tRNA ligase, found in Thermococcus sibiricus (strain DSM 12597 / MM 739).